A 230-amino-acid polypeptide reads, in one-letter code: Small ribosomal subunit protein uS3 (230 aa).

In terms of domain architecture, KH type-2 spans 39 to 107 (VRNYLRQKLA…PVHVNIEEIR (69 aa)). Positions 210-230 (SSKPEHESKQRKAGRRNAAAN) are disordered.

It belongs to the universal ribosomal protein uS3 family. As to quaternary structure, part of the 30S ribosomal subunit. Forms a tight complex with proteins S10 and S14.

Functionally, binds the lower part of the 30S subunit head. Binds mRNA in the 70S ribosome, positioning it for translation. The protein is Small ribosomal subunit protein uS3 of Neisseria meningitidis serogroup C (strain 053442).